The primary structure comprises 445 residues: Tubulin beta-3 chain (445 aa).

The MREI motif motif lies at 1 to 4; the sequence is MREI. Positions 11, 69, 138, 142, 143, 144, 204, and 226 each coordinate GTP. Glutamate 69 contributes to the Mg(2+) binding site. A disordered region spans residues 425 to 445; sequence YQDATAEEEGEFEEEAEEEAE. A compositionally biased stretch (acidic residues) spans 429-445; that stretch reads TAEEEGEFEEEAEEEAE. Glutamate 438 carries the post-translational modification 5-glutamyl polyglutamate.

Belongs to the tubulin family. In terms of assembly, dimer of alpha and beta chains. A typical microtubule is a hollow water-filled tube with an outer diameter of 25 nm and an inner diameter of 15 nM. Alpha-beta heterodimers associate head-to-tail to form protofilaments running lengthwise along the microtubule wall with the beta-tubulin subunit facing the microtubule plus end conferring a structural polarity. Microtubules usually have 13 protofilaments but different protofilament numbers can be found in some organisms and specialized cells. Mg(2+) is required as a cofactor. In terms of processing, some glutamate residues at the C-terminus are polyglycylated, resulting in polyglycine chains on the gamma-carboxyl group. Glycylation is mainly limited to tubulin incorporated into axonemes (cilia and flagella) whereas glutamylation is prevalent in neuronal cells, centrioles, axonemes, and the mitotic spindle. Both modifications can coexist on the same protein on adjacent residues, and lowering polyglycylation levels increases polyglutamylation, and reciprocally. The precise function of polyglycylation is still unclear. Some glutamate residues at the C-terminus are polyglutamylated, resulting in polyglutamate chains on the gamma-carboxyl group. Polyglutamylation plays a key role in microtubule severing by spastin (SPAST). SPAST preferentially recognizes and acts on microtubules decorated with short polyglutamate tails: severing activity by SPAST increases as the number of glutamates per tubulin rises from one to eight, but decreases beyond this glutamylation threshold. In terms of tissue distribution, highly expressed in testis.

The protein resides in the cytoplasm. It is found in the cytoskeleton. Functionally, tubulin is the major constituent of microtubules, a cylinder consisting of laterally associated linear protofilaments composed of alpha- and beta-tubulin heterodimers. Microtubules grow by the addition of GTP-tubulin dimers to the microtubule end, where a stabilizing cap forms. Below the cap, tubulin dimers are in GDP-bound state, owing to GTPase activity of alpha-tubulin. TUBB3 plays a role in dorsal root ganglion axon projection towards the spinal cord. This Gallus gallus (Chicken) protein is Tubulin beta-3 chain.